Consider the following 137-residue polypeptide: Large ribosomal subunit protein uL16 (137 aa).

This sequence belongs to the universal ribosomal protein uL16 family. In terms of assembly, part of the 50S ribosomal subunit.

Its function is as follows. Binds 23S rRNA and is also seen to make contacts with the A and possibly P site tRNAs. This Rhodopseudomonas palustris (strain ATCC BAA-98 / CGA009) protein is Large ribosomal subunit protein uL16.